The following is a 255-amino-acid chain: Small ribosomal subunit protein uS2 (255 aa).

Residues 231–255 form a disordered region; sequence RLQTGAEEEFSTEGEEVVEETPAEA. Residues 236-255 are compositionally biased toward acidic residues; it reads AEEEFSTEGEEVVEETPAEA.

This sequence belongs to the universal ribosomal protein uS2 family.

The sequence is that of Small ribosomal subunit protein uS2 from Citrifermentans bemidjiense (strain ATCC BAA-1014 / DSM 16622 / JCM 12645 / Bem) (Geobacter bemidjiensis).